Here is a 168-residue protein sequence, read N- to C-terminus: Ribosome maturation factor RimM (168 aa).

Residues 96–168 enclose the PRC barrel domain; the sequence is EDEYFITDLI…VMIVRLLEGL (73 aa).

The protein belongs to the RimM family. As to quaternary structure, binds ribosomal protein uS19.

The protein localises to the cytoplasm. In terms of biological role, an accessory protein needed during the final step in the assembly of 30S ribosomal subunit, possibly for assembly of the head region. Essential for efficient processing of 16S rRNA. May be needed both before and after RbfA during the maturation of 16S rRNA. It has affinity for free ribosomal 30S subunits but not for 70S ribosomes. In Caldanaerobacter subterraneus subsp. tengcongensis (strain DSM 15242 / JCM 11007 / NBRC 100824 / MB4) (Thermoanaerobacter tengcongensis), this protein is Ribosome maturation factor RimM.